Here is a 187-residue protein sequence, read N- to C-terminus: UPF0215 protein PAE0952 (187 aa).

This sequence belongs to the UPF0215 family.

The protein is UPF0215 protein PAE0952 of Pyrobaculum aerophilum (strain ATCC 51768 / DSM 7523 / JCM 9630 / CIP 104966 / NBRC 100827 / IM2).